Here is a 122-residue protein sequence, read N- to C-terminus: Small ribosomal subunit protein uS13 (122 aa).

The tract at residues 96 to 122 is disordered; the sequence is LPVRGQRTKTNSRTRKGKRKTIAGKKK. Residues 101 to 122 show a composition bias toward basic residues; sequence QRTKTNSRTRKGKRKTIAGKKK.

This sequence belongs to the universal ribosomal protein uS13 family. As to quaternary structure, part of the 30S ribosomal subunit. Forms a loose heterodimer with protein S19. Forms two bridges to the 50S subunit in the 70S ribosome.

Its function is as follows. Located at the top of the head of the 30S subunit, it contacts several helices of the 16S rRNA. In the 70S ribosome it contacts the 23S rRNA (bridge B1a) and protein L5 of the 50S subunit (bridge B1b), connecting the 2 subunits; these bridges are implicated in subunit movement. Contacts the tRNAs in the A and P-sites. In Chlamydia trachomatis serovar L2 (strain ATCC VR-902B / DSM 19102 / 434/Bu), this protein is Small ribosomal subunit protein uS13.